Consider the following 280-residue polypeptide: MSFGGHTPRKRFGQHWLRDERVLDRILDASDLGDDDRVLEVGPGRGALTERLLASSAAAVHAVELDRDLVAGLQDRFGDSPRFSLREGDVLAVPLTLPDGQRATKVVANIPYNITGPLLERLIGRLDQPVDPPYQRLVLLVQKEVAERIRARPGASSFSALSVRMQLLAKCSSVCPVPPRCFQPPPKVHSEVIRLDPLPLEQRPDPVICRRVERLLKQAFLARRKMLRNTLTVSQPLSELETITQQAGIDLRQRPQEVAPHAWVELARGLNQADSAASSL.

Residues H15, L17, G42, E64, D89, and N109 each coordinate S-adenosyl-L-methionine.

This sequence belongs to the class I-like SAM-binding methyltransferase superfamily. rRNA adenine N(6)-methyltransferase family. RsmA subfamily.

It is found in the cytoplasm. It catalyses the reaction adenosine(1518)/adenosine(1519) in 16S rRNA + 4 S-adenosyl-L-methionine = N(6)-dimethyladenosine(1518)/N(6)-dimethyladenosine(1519) in 16S rRNA + 4 S-adenosyl-L-homocysteine + 4 H(+). Functionally, specifically dimethylates two adjacent adenosines (A1518 and A1519) in the loop of a conserved hairpin near the 3'-end of 16S rRNA in the 30S particle. May play a critical role in biogenesis of 30S subunits. The protein is Ribosomal RNA small subunit methyltransferase A of Synechococcus sp. (strain WH7803).